Reading from the N-terminus, the 417-residue chain is Squamosa promoter-binding-like protein 14 (417 aa).

Gly residues-rich tracts occupy residues 1–26 (MEMASGGGAAAAAGGGVGGSGGGGGG) and 51–60 (AGGGGTGSGS). 2 disordered regions span residues 1 to 32 (MEMASGGGAAAAAGGGVGGSGGGGGGGDEHRQ) and 51 to 102 (AGGG…PPPP). The span at 61–74 (GSASAAPPSSSSKA) shows a compositional bias: low complexity. Residues 75-84 (AGGGRGGGGK) are compositionally biased toward gly residues. Residues 101 to 178 (PPRCQVEGCG…AGHNERRRRP (78 aa)) form an SBP-type zinc finger. Zn(2+) contacts are provided by C104, C109, C126, H129, C145, C148, and H152. The Bipartite nuclear localization signal motif lies at 161–177 (KRSCRRRLAGHNERRRR). S163 bears the Phosphoserine mark. Residue C164 coordinates Zn(2+). Residues 387–417 (LQGNGPAPAPRIDPGSGSTFDQTSNTMDWSL) form a disordered region. Residues 402–417 (SGSTFDQTSNTMDWSL) are compositionally biased toward polar residues.

Interacts with PCF1 and PCF2. Interacts with IPI1. Interacts with D53. Interacts with SLR1. Interacts (via C-terminus) with SHI1. Post-translationally, phosphorylated at Ser-163 in response to infection by the fungal pathogen Magnaporthe oryzae. Ubiquitinated by IPI1, which leads to proteasomal degradation. As to expression, expressed in young panicles. Expressed in the shoot apex at both the vegetative and reproductive stages. Highly expressed in the promordia of primary and secondary branches. Highly expressed in young panicles.

It localises to the nucleus. In terms of biological role, transcriptional activator that binds to the SBP-box DNA core binding motif 5'-GTAC-3'. Can target the TCP motif 5'-TGGGCC/T-3' through interaction with PCF1 and PCF2. Key regulator of the plant architecture that controls shoot branching and panicle development. Promotes panicle branching. Promotes high grain yield. Binds to the promoters of TB1 and DEP1. Suppresses rice tillering mainly through positive regulation of TB1. Regulates plant height and panicle length through positive regulation of DEP1. Repressed by D53 in strigolactone (SL) signaling. Acts with D53 to mediate the SL-regulated tiller development. Functions as a direct downstream component of D53 in regulating tiller number and SL-induced gene expression. Binds directly to the D53 promoter and plays a critical role in the negative feedback regulation of SL-induced D53 expression. Involved in defense response against pathogens. Phosphorylated at Ser-163 in response to infection by the fungal pathogen Magnaporthe oryzae. Phosphorylation reduces SPL14/IPA1 binding to the GTAC site in the DEP1 promoter and enhances binding to the TGGGCC site in the WRKY45 promoter. Binding to the promoter of the pathogen defense gene WRKY45 activates its expression, leading to enhanced disease resistance. Reduces gibberellin-mediated disease susceptibility by stabilizing SLR1. Possesses transactivation activity in yeast cells. The sequence is that of Squamosa promoter-binding-like protein 14 from Oryza sativa subsp. japonica (Rice).